The primary structure comprises 136 residues: UPF0216 protein PF0452 (136 aa).

This sequence belongs to the UPF0216 family.

The sequence is that of UPF0216 protein PF0452 from Pyrococcus furiosus (strain ATCC 43587 / DSM 3638 / JCM 8422 / Vc1).